A 405-amino-acid polypeptide reads, in one-letter code: Tyrosine-protein phosphatase non-receptor type eak-6 (405 aa).

The 280-residue stretch at 30–309 folds into the Tyrosine-protein phosphatase domain; sequence INQRINIIAD…SFIYDIIIKY (280 aa). Catalysis depends on C248, which acts as the Phosphocysteine intermediate.

It belongs to the protein-tyrosine phosphatase family. Expressed in the 2 embryonic head hypodermal cells XXXL/R.

Its subcellular location is the cytoplasm. The protein localises to the cell membrane. The enzyme catalyses O-phospho-L-tyrosyl-[protein] + H2O = L-tyrosyl-[protein] + phosphate. In terms of biological role, putative phosphatase which, together with eak-4 and sdf-9, negatively regulates dauer larva formation downstream of insulin-like receptor daf-2 and in parallel of age-1, pdk-1 and akt-1. This Caenorhabditis elegans protein is Tyrosine-protein phosphatase non-receptor type eak-6.